Consider the following 341-residue polypeptide: MLSLSKNWNALIKTDKVSYESFHETNNKSKIIVEPLERGFGLTLGNAMRRVLLSSLQGAAVTSIKIPGIEHEFSSIPGVKEDISEIILNVKGIEIKMHVAEKRVIRLKATGPGAITAGMIEAGHDVEILNPDHVICNLAKNKQFEMELTCKVGKGYTLSTNNNEDNNLPIGEIAIDALFNPVKSVTYKVENTRIGQVTDYDKLIMFVETNGDILPEMAVGLAARILQEQLQLFISFEEQEEDKQVKTDALPFSPYLLKRVDELELSVRSANCLKNDNIIYIGDLVKRTEADMLRTPNFGRKSLNEIKEILAKFSLRFGMDVPDWPPENIHELSKRYEDSYN.

Positions 1-237 (MLSLSKNWNA…EQLQLFISFE (237 aa)) are alpha N-terminal domain (alpha-NTD). The interval 252–341 (FSPYLLKRVD…LSKRYEDSYN (90 aa)) is alpha C-terminal domain (alpha-CTD).

The protein belongs to the RNA polymerase alpha chain family. In terms of assembly, homodimer. The RNAP catalytic core consists of 2 alpha, 1 beta, 1 beta' and 1 omega subunit. When a sigma factor is associated with the core the holoenzyme is formed, which can initiate transcription.

The catalysed reaction is RNA(n) + a ribonucleoside 5'-triphosphate = RNA(n+1) + diphosphate. In terms of biological role, DNA-dependent RNA polymerase catalyzes the transcription of DNA into RNA using the four ribonucleoside triphosphates as substrates. The protein is DNA-directed RNA polymerase subunit alpha of Rickettsia bellii (strain OSU 85-389).